The following is a 158-amino-acid chain: Ribonuclease H (158 aa).

The 142-residue stretch at 3–144 (ELKLIHIFTD…CDQLARAAAE (142 aa)) folds into the RNase H type-1 domain. Asp12, Glu50, Asp72, and Asp136 together coordinate Mg(2+). Positions 137 to 158 (QLARAAAEASPTQVDEGYQPES) are disordered.

It belongs to the RNase H family. As to quaternary structure, monomer. Mg(2+) is required as a cofactor.

It is found in the cytoplasm. It catalyses the reaction Endonucleolytic cleavage to 5'-phosphomonoester.. Endonuclease that specifically degrades the RNA of RNA-DNA hybrids. This is Ribonuclease H from Shewanella sp. (strain ANA-3).